Consider the following 185-residue polypeptide: Ribosome-recycling factor (185 aa).

The protein belongs to the RRF family.

The protein localises to the cytoplasm. Its function is as follows. Responsible for the release of ribosomes from messenger RNA at the termination of protein biosynthesis. May increase the efficiency of translation by recycling ribosomes from one round of translation to another. The chain is Ribosome-recycling factor from Campylobacter lari (strain RM2100 / D67 / ATCC BAA-1060).